We begin with the raw amino-acid sequence, 627 residues long: Asparagine synthetase domain-containing protein 1 (627 aa).

The For GATase activity role is filled by C2. Residues 2–184 form the Glutamine amidotransferase type-2 domain; the sequence is CGICCSVSFS…ASGIFQIDLN (183 aa). Residues 308-597 form the Asparagine synthetase domain; sequence ASKEVLKTCS…GLPASALLPK (290 aa). The tract at residues 373-404 is disordered; the sequence is QQNHHEIPSEESSQSPAADEGPGEAEVPDRVT.

The sequence is that of Asparagine synthetase domain-containing protein 1 (Asnsd1) from Mus musculus (Mouse).